The sequence spans 409 residues: Gamma-glutamyl phosphate reductase (409 aa).

It belongs to the gamma-glutamyl phosphate reductase family.

It localises to the cytoplasm. It carries out the reaction L-glutamate 5-semialdehyde + phosphate + NADP(+) = L-glutamyl 5-phosphate + NADPH + H(+). It functions in the pathway amino-acid biosynthesis; L-proline biosynthesis; L-glutamate 5-semialdehyde from L-glutamate: step 2/2. Functionally, catalyzes the NADPH-dependent reduction of L-glutamate 5-phosphate into L-glutamate 5-semialdehyde and phosphate. The product spontaneously undergoes cyclization to form 1-pyrroline-5-carboxylate. The protein is Gamma-glutamyl phosphate reductase of Mycobacterium leprae (strain TN).